The following is a 267-amino-acid chain: Glucosamine-6-phosphate deaminase (267 aa).

The Proton acceptor; for enolization step role is filled by Asp72. The active-site For ring-opening step is Asp141. His143 functions as the Proton acceptor; for ring-opening step in the catalytic mechanism. Residue Glu148 is the For ring-opening step of the active site.

The protein belongs to the glucosamine/galactosamine-6-phosphate isomerase family. NagB subfamily. Homohexamer.

The catalysed reaction is alpha-D-glucosamine 6-phosphate + H2O = beta-D-fructose 6-phosphate + NH4(+). It functions in the pathway amino-sugar metabolism; N-acetylneuraminate degradation; D-fructose 6-phosphate from N-acetylneuraminate: step 5/5. Its activity is regulated as follows. Allosterically activated by N-acetylglucosamine 6-phosphate (GlcNAc6P). Functionally, catalyzes the reversible isomerization-deamination of glucosamine 6-phosphate (GlcN6P) to form fructose 6-phosphate (Fru6P) and ammonium ion. The polypeptide is Glucosamine-6-phosphate deaminase (Actinobacillus pleuropneumoniae serotype 3 (strain JL03)).